A 231-amino-acid chain; its full sequence is Large ribosomal subunit protein uL1 (231 aa).

The protein belongs to the universal ribosomal protein uL1 family. As to quaternary structure, part of the 50S ribosomal subunit.

Functionally, binds directly to 23S rRNA. The L1 stalk is quite mobile in the ribosome, and is involved in E site tRNA release. In terms of biological role, protein L1 is also a translational repressor protein, it controls the translation of the L11 operon by binding to its mRNA. This is Large ribosomal subunit protein uL1 from Pseudomonas fluorescens (strain ATCC BAA-477 / NRRL B-23932 / Pf-5).